Reading from the N-terminus, the 406-residue chain is Magnesium transporter NIPA4 (406 aa).

At 1-57 (MELRVANANGSCENGSIVSLYCSSQEVLCQIVRGISPEEPYNATLITWQERVRKKYG) the chain is on the extracellular side. N-linked (GlcNAc...) asparagine glycans are attached at residues N9, N14, and N42. A helical membrane pass occupies residues 58-78 (FYIGVGLAFLSCFLIGTSVIL). The Cytoplasmic segment spans residues 79–126 (KKKGLIRLVATGATRAVNGGYGYLKDPMWWAGMATMSAGEVANFGAYA). The helical transmembrane segment at 127–147 (FAPATVVTPLGALSVLISAIF) threads the bilayer. Over 148–155 (SSYCLGES) the chain is Extracellular. A helical transmembrane segment spans residues 156 to 176 (LNLLGKLGCVICMAGSTVMVI). Residues 177 to 197 (HAPKEEKVTTVAEMASKMKDT) are Cytoplasmic-facing. Residues 198–218 (GFIVFAVLLVVSCLILIFIVA) traverse the membrane as a helical segment. Residues 219–225 (PRYGQRN) are Extracellular-facing. Residues 226 to 246 (ILIYIIICSVIGSFSVTAVKG) form a helical membrane-spanning segment. Over 247–263 (LGVTIRNFFQGLPVVRH) the chain is Cytoplasmic. A helical transmembrane segment spans residues 264-284 (PLPYILSLILGLSIIIQVNFL). The Extracellular segment spans residues 285–295 (NRALDIFNTSL). N-linked (GlcNAc...) asparagine glycosylation is present at N292. Residues 296–316 (VFPIYYVFFTTVVVASSIVLF) form a helical membrane-spanning segment. Topologically, residues 317–326 (KEWYTMSAVD) are cytoplasmic. The helical transmembrane segment at 327 to 347 (IVGTLSGFVTIILGVFMLHAF) threads the bilayer. Over 348–406 (KDLDINQISLPHTHKNPTPAPAPEPTVIKLEDKNVLVDNIELASTPSPQQKPKVFMTDS) the chain is Extracellular.

This sequence belongs to the NIPA family.

The protein resides in the cell membrane. It catalyses the reaction Mg(2+)(in) = Mg(2+)(out). Its function is as follows. Acts as a Mg(2+) transporter. Can also transport other divalent cations such as Ba(2+), Sr(2+) and Fe(2+) but to a much less extent than Mg(2+). May be a receptor for ligands (trioxilins A3 and B3) from the hepoxilin pathway. The sequence is that of Magnesium transporter NIPA4 (Nipal4) from Mus musculus (Mouse).